We begin with the raw amino-acid sequence, 714 residues long: Fimbrin-3 (714 aa).

The 49-residue stretch at 7–55 folds into the EF-hand domain; the sequence is VIVSDPWLQSQLTQVELRSLNSKFVALKNQSGKVTLEDLPSVLVKVKSL. 4 consecutive Calponin-homology (CH) domains span residues 124-241, 269-372, 393-499, and 514-622; these read QSEK…KIQL, LPPE…HERN, CRDE…RTHM, and DMTD…YWSL. 2 actin-binding regions span residues 124–372 and 393–622; these read QSEK…HERN and CRDE…YWSL. Residues 628–662 show a composition bias toward low complexity; it reads SSESSSSSSDSSSTHSTTTTCTSTCTSTDASPAPS. The disordered stretch occupies residues 628–694; it reads SSESSSSSSD…NEVSSLTIEE (67 aa). The span at 670 to 680 shows a compositional bias: polar residues; sequence SSLNGEVSSLT. Acidic residues predominate over residues 681–694; sequence IEEDNEVSSLTIEE.

In terms of assembly, interacts with F-actin.

Its subcellular location is the cytoplasm. It localises to the cytoskeleton. Functionally, cross-links actin filaments (F-actin). Stabilizes and prevents F-actin depolymerization mediated by profilin. May regulate actin cytoarchitecture, cell cycle, cell division, cell elongation and cytoplasmic tractus. This chain is Fimbrin-3, found in Arabidopsis thaliana (Mouse-ear cress).